A 282-amino-acid chain; its full sequence is Pantothenate synthetase (282 aa).

30–37 (MGYLHEGH) lines the ATP pocket. The Proton donor role is filled by His37. Gln61 lines the (R)-pantoate pocket. Gln61 contributes to the beta-alanine binding site. 147–150 (GMKD) is an ATP binding site. Gln153 lines the (R)-pantoate pocket. ATP is bound by residues Val176 and 184-187 (KSSR).

Belongs to the pantothenate synthetase family. In terms of assembly, homodimer.

The protein localises to the cytoplasm. The enzyme catalyses (R)-pantoate + beta-alanine + ATP = (R)-pantothenate + AMP + diphosphate + H(+). It participates in cofactor biosynthesis; (R)-pantothenate biosynthesis; (R)-pantothenate from (R)-pantoate and beta-alanine: step 1/1. Its function is as follows. Catalyzes the condensation of pantoate with beta-alanine in an ATP-dependent reaction via a pantoyl-adenylate intermediate. This is Pantothenate synthetase from Bacillus cytotoxicus (strain DSM 22905 / CIP 110041 / 391-98 / NVH 391-98).